The primary structure comprises 121 residues: Cysteine-rich neurotrophic factor (121 aa).

The signal sequence occupies residues 1 to 18 (MLLKLIVALSLTLTLASA). Asn57 carries an N-linked (GlcNAc...) asparagine glycan.

It localises to the secreted. In terms of biological role, interacts with the p75 low-affinity neurotrophin receptor. Evokes neurite outgrowth and modulated calcium currents in pedal motor neurons. May be involved in target-derived trophic support for motor neurons. This chain is Cysteine-rich neurotrophic factor, found in Lymnaea stagnalis (Great pond snail).